A 167-amino-acid polypeptide reads, in one-letter code: Fimbrial adapter PapF (167 aa).

An N-terminal signal peptide occupies residues 1-18; sequence MIRLSLFISLLLTSVAVL.

It localises to the secreted. It is found in the fimbrium. In terms of biological role, adapter that links the PapG adhesin to the distal end of the tip fibrillum. PapF is required for the correct presentation of the adhesin at the distal end of the tip fibrillum. Pili are polar filaments radiating from the surface of the bacterium to a length of 0.5-1.5 micrometers and numbering 100-300 per cell, and enable bacteria to colonize the epithelium of specific host organs. The protein is Fimbrial adapter PapF (papF) of Escherichia coli.